We begin with the raw amino-acid sequence, 1181 residues long: HEAT repeat-containing protein 6 (1181 aa).

The stretch at 159 to 198 is one HEAT 1 repeat; sequence LELLGETGLLMKLSDLAQSDPEVRRAAVHCMANLCLSVPG. Disordered stretches follow at residues 294 to 347 and 371 to 407; these read DGRT…PVTG and LDGSGAAGKDGVSSPFSSSSWKRVSSSESDFSDAEGG. Residues 300–312 show a composition bias toward polar residues; the sequence is KPQQSESSASRPT. Positions 313 to 325 are enriched in basic residues; it reads LNKKKKSKVKPKK. A phosphoserine mark is found at serine 336, serine 337, serine 399, and serine 402. Over residues 383-399 the composition is skewed to low complexity; the sequence is SSPFSSSSWKRVSSSES. HEAT repeat units follow at residues 452 to 490, 514 to 552, and 558 to 595; these read ELGSPQSVSLMTLTLKDPSPKTRACALQVLSAILEGSKQ, SSIRELHRCLLLALVAESSSQTLTQIIKCLANLVSDAPY, and SLLTKVWNQIKPYIRHKDVNVRVSSLTLLGAIVSTHAP. The interval 613–648 is disordered; sequence NSNSATPHLSPPDWWKKAPAGPSLEETSVSSPKGSS. Threonine 618 is subject to Phosphothreonine. Over residues 637–646 the composition is skewed to polar residues; that stretch reads EETSVSSPKG. Phosphoserine is present on serine 643.

The sequence is that of HEAT repeat-containing protein 6 (HEATR6) from Pongo abelii (Sumatran orangutan).